A 466-amino-acid polypeptide reads, in one-letter code: 3-isopropylmalate dehydratase large subunit (466 aa).

Cysteine 347, cysteine 407, and cysteine 410 together coordinate [4Fe-4S] cluster.

Belongs to the aconitase/IPM isomerase family. LeuC type 1 subfamily. Heterodimer of LeuC and LeuD. Requires [4Fe-4S] cluster as cofactor.

It carries out the reaction (2R,3S)-3-isopropylmalate = (2S)-2-isopropylmalate. It functions in the pathway amino-acid biosynthesis; L-leucine biosynthesis; L-leucine from 3-methyl-2-oxobutanoate: step 2/4. Catalyzes the isomerization between 2-isopropylmalate and 3-isopropylmalate, via the formation of 2-isopropylmaleate. The sequence is that of 3-isopropylmalate dehydratase large subunit from Shewanella piezotolerans (strain WP3 / JCM 13877).